Consider the following 204-residue polypeptide: Proteasome subunit beta type-3 (204 aa).

It belongs to the peptidase T1B family. As to quaternary structure, the 26S proteasome consists of a 20S proteasome core and two 19S regulatory subunits. The 20S proteasome core is composed of 28 subunits that are arranged in four stacked rings, resulting in a barrel-shaped structure. The two end rings are each formed by seven alpha subunits, and the two central rings are each formed by seven beta subunits. The catalytic chamber with the active sites is on the inside of the barrel.

It localises to the cytoplasm. The protein localises to the nucleus. Its function is as follows. Non-catalytic component of the proteasome, a multicatalytic proteinase complex which is characterized by its ability to cleave peptides with Arg, Phe, Tyr, Leu, and Glu adjacent to the leaving group at neutral or slightly basic pH. The proteasome has an ATP-dependent proteolytic activity. This Caenorhabditis elegans protein is Proteasome subunit beta type-3 (pbs-3).